The chain runs to 983 residues: Type IV secretion system protein CagE (983 aa).

597-604 is an ATP binding site; that stretch reads GSTGSGKT.

This sequence belongs to the TrbE/VirB4 family. As to quaternary structure, component of the Cag type IV secretion system, which is composed of a wheel-shaped outer membrane complex (OMC) and an inner membrane complex (IMC). Interacts with CagV and CagBeta.

It is found in the cell inner membrane. The enzyme catalyses ATP + H2O + cellular proteinSide 1 = ADP + phosphate + cellular proteinSide 2.. Functionally, ATPase component of the type IV secretion system Cag (Cag-T4SS). Acts as a molecular motor to provide the energy that is required for the export of proteins. Required for CagA translocation and induction of IL-8 in host gastric epithelial cells. Plays a key role in Cag-T4SS pilus biogenesis, especially in the localization and stabilization of the pilus-associated components CagI, CagL and the surface protein CagH. Is also critical for assembly of the entire cytoplasmic portion of the Cag inner membrane complex (IMC). In Helicobacter pylori (strain ATCC 700392 / 26695) (Campylobacter pylori), this protein is Type IV secretion system protein CagE.